A 223-amino-acid chain; its full sequence is UPF0441 protein YgiB (223 aa).

Residues 178–195 are compositionally biased toward low complexity; it reads TVPKTAMAPKPATTTTVT. The interval 178-223 is disordered; sequence TVPKTAMAPKPATTTTVTRGGFGESVAKQSTMQRSAAGTSTRSMGG. The segment covering 204–223 has biased composition (polar residues); it reads AKQSTMQRSAAGTSTRSMGG.

This sequence belongs to the UPF0441 family.

The sequence is that of UPF0441 protein YgiB from Salmonella paratyphi B (strain ATCC BAA-1250 / SPB7).